The primary structure comprises 258 residues: Isoprenyl transferase (258 aa).

Residue aspartate 24 is part of the active site. Position 24 (aspartate 24) interacts with Mg(2+). Substrate is bound by residues glycine 25 to arginine 28, tryptophan 29, arginine 37, histidine 41, and serine 69 to glutamate 71. Asparagine 72 (proton acceptor) is an active-site residue. Substrate is bound by residues tryptophan 73, arginine 75, arginine 190, and arginine 196–serine 198. Residue glutamate 209 participates in Mg(2+) binding.

Belongs to the UPP synthase family. Homodimer. It depends on Mg(2+) as a cofactor.

Catalyzes the condensation of isopentenyl diphosphate (IPP) with allylic pyrophosphates generating different type of terpenoids. This chain is Isoprenyl transferase, found in Ralstonia nicotianae (strain ATCC BAA-1114 / GMI1000) (Ralstonia solanacearum).